Here is a 475-residue protein sequence, read N- to C-terminus: Tubulin gamma-1 chain (475 aa).

Residue 142–148 (AGGTGSG) coordinates GTP. Residues 453 to 475 (VKRGNGPVDSKSEDSRSVTSAGS) form a disordered region.

This sequence belongs to the tubulin family. Interacts with Ote.

The protein resides in the cytoplasm. It localises to the cytoskeleton. It is found in the microtubule organizing center. The protein localises to the centrosome. Its subcellular location is the perinuclear region. Its function is as follows. Tubulin is the major constituent of microtubules. The gamma chain is found at microtubule organizing centers (MTOC) such as the spindle poles or the centrosome, suggesting that it is involved in the minus-end nucleation of microtubule assembly. This Drosophila melanogaster (Fruit fly) protein is Tubulin gamma-1 chain (gammaTub23C).